A 194-amino-acid chain; its full sequence is Holliday junction branch migration complex subunit RuvA (194 aa).

Residues Met1–Leu64 form a domain I region. The segment at Ser65–Ser140 is domain II. The interval Ser140 to Lys144 is flexible linker. Residues Leu145 to Arg194 form a domain III region.

The protein belongs to the RuvA family. Homotetramer. Forms an RuvA(8)-RuvB(12)-Holliday junction (HJ) complex. HJ DNA is sandwiched between 2 RuvA tetramers; dsDNA enters through RuvA and exits via RuvB. An RuvB hexamer assembles on each DNA strand where it exits the tetramer. Each RuvB hexamer is contacted by two RuvA subunits (via domain III) on 2 adjacent RuvB subunits; this complex drives branch migration. In the full resolvosome a probable DNA-RuvA(4)-RuvB(12)-RuvC(2) complex forms which resolves the HJ.

Its subcellular location is the cytoplasm. In terms of biological role, the RuvA-RuvB-RuvC complex processes Holliday junction (HJ) DNA during genetic recombination and DNA repair, while the RuvA-RuvB complex plays an important role in the rescue of blocked DNA replication forks via replication fork reversal (RFR). RuvA specifically binds to HJ cruciform DNA, conferring on it an open structure. The RuvB hexamer acts as an ATP-dependent pump, pulling dsDNA into and through the RuvAB complex. HJ branch migration allows RuvC to scan DNA until it finds its consensus sequence, where it cleaves and resolves the cruciform DNA. In Xylella fastidiosa (strain 9a5c), this protein is Holliday junction branch migration complex subunit RuvA.